Reading from the N-terminus, the 138-residue chain is Large ribosomal subunit protein bL19 (138 aa).

This sequence belongs to the bacterial ribosomal protein bL19 family.

This protein is located at the 30S-50S ribosomal subunit interface and may play a role in the structure and function of the aminoacyl-tRNA binding site. The protein is Large ribosomal subunit protein bL19 of Rickettsia typhi (strain ATCC VR-144 / Wilmington).